A 635-amino-acid chain; its full sequence is Threonine--tRNA ligase (635 aa).

Positions 1–61 (MINISFPDGS…DNDCKLRILT (61 aa)) constitute a TGS domain. Residues 242–533 (DHRKLGRELD…LIEEYAGRFP (292 aa)) are catalytic. Residues Cys333, His384, and His510 each coordinate Zn(2+).

Belongs to the class-II aminoacyl-tRNA synthetase family. In terms of assembly, homodimer. Zn(2+) serves as cofactor.

Its subcellular location is the cytoplasm. The enzyme catalyses tRNA(Thr) + L-threonine + ATP = L-threonyl-tRNA(Thr) + AMP + diphosphate + H(+). Functionally, catalyzes the attachment of threonine to tRNA(Thr) in a two-step reaction: L-threonine is first activated by ATP to form Thr-AMP and then transferred to the acceptor end of tRNA(Thr). Also edits incorrectly charged L-seryl-tRNA(Thr). This Rickettsia peacockii (strain Rustic) protein is Threonine--tRNA ligase.